The chain runs to 508 residues: Photosystem II CP47 reaction center protein (508 aa).

Helical transmembrane passes span 21–36 (AVHI…WAGS), 101–115 (IVFS…IWHW), 140–156 (GIHL…FGAF), 203–218 (IAAG…FHLS), 237–252 (VLSS…AFIV), and 457–472 (TFAL…HGAR).

The protein belongs to the PsbB/PsbC family. PsbB subfamily. As to quaternary structure, PSII is composed of 1 copy each of membrane proteins PsbA, PsbB, PsbC, PsbD, PsbE, PsbF, PsbH, PsbI, PsbJ, PsbK, PsbL, PsbM, PsbT, PsbX, PsbY, PsbZ, Psb30/Ycf12, at least 3 peripheral proteins of the oxygen-evolving complex and a large number of cofactors. It forms dimeric complexes. Requires Binds multiple chlorophylls. PSII binds additional chlorophylls, carotenoids and specific lipids. as cofactor.

It is found in the plastid. The protein resides in the chloroplast thylakoid membrane. Its function is as follows. One of the components of the core complex of photosystem II (PSII). It binds chlorophyll and helps catalyze the primary light-induced photochemical processes of PSII. PSII is a light-driven water:plastoquinone oxidoreductase, using light energy to abstract electrons from H(2)O, generating O(2) and a proton gradient subsequently used for ATP formation. This Gnetum parvifolium (Small-leaved jointfir) protein is Photosystem II CP47 reaction center protein.